Reading from the N-terminus, the 389-residue chain is Phospho-N-acetylmuramoyl-pentapeptide-transferase (389 aa).

10 consecutive transmembrane segments (helical) span residues Arg25 to Ile45, Thr73 to Leu93, Phe97 to Tyr117, Phe135 to Ala155, Ile190 to Ala210, Gly222 to Met242, Gly258 to Trp278, Val286 to Ile306, Ile311 to Val331, and Gln366 to Leu386.

This sequence belongs to the glycosyltransferase 4 family. MraY subfamily. Mg(2+) is required as a cofactor.

The protein resides in the cell inner membrane. It catalyses the reaction UDP-N-acetyl-alpha-D-muramoyl-L-alanyl-gamma-D-glutamyl-meso-2,6-diaminopimeloyl-D-alanyl-D-alanine + di-trans,octa-cis-undecaprenyl phosphate = di-trans,octa-cis-undecaprenyl diphospho-N-acetyl-alpha-D-muramoyl-L-alanyl-D-glutamyl-meso-2,6-diaminopimeloyl-D-alanyl-D-alanine + UMP. Its pathway is cell wall biogenesis; peptidoglycan biosynthesis. Catalyzes the initial step of the lipid cycle reactions in the biosynthesis of the cell wall peptidoglycan: transfers peptidoglycan precursor phospho-MurNAc-pentapeptide from UDP-MurNAc-pentapeptide onto the lipid carrier undecaprenyl phosphate, yielding undecaprenyl-pyrophosphoryl-MurNAc-pentapeptide, known as lipid I. In Burkholderia cenocepacia (strain HI2424), this protein is Phospho-N-acetylmuramoyl-pentapeptide-transferase.